The sequence spans 90 residues: UPF0367 protein PMT9312_0127 (90 aa).

The protein belongs to the UPF0367 family.

The sequence is that of UPF0367 protein PMT9312_0127 from Prochlorococcus marinus (strain MIT 9312).